Here is a 614-residue protein sequence, read N- to C-terminus: Leucine aminopeptidase 2 (614 aa).

A peptide is bound by residues 139 to 141 (QCQ) and 271 to 276 (PYGGME). Zn(2+) is bound at residue H300. The Proton acceptor role is filled by E301. Residues H304 and E323 each contribute to the Zn(2+) site. Y385 acts as the Proton donor in catalysis.

The protein belongs to the peptidase M1 family. It depends on Zn(2+) as a cofactor.

Its subcellular location is the cytoplasm. The protein localises to the nucleus. It catalyses the reaction an epoxide + H2O = an ethanediol. In terms of biological role, aminopeptidase that preferentially cleaves di- and tripeptides. Also has low epoxide hydrolase activity (in vitro). Can hydrolyze the epoxide leukotriene LTA(4) but it forms preferentially 5,6-dihydroxy-7,9,11,14-eicosatetraenoic acid rather than the cytokine leukotriene B(4) as the product compared to the homologous mammalian enzyme (in vitro). This Aspergillus fumigatus (strain ATCC MYA-4609 / CBS 101355 / FGSC A1100 / Af293) (Neosartorya fumigata) protein is Leucine aminopeptidase 2.